The chain runs to 202 residues: tRNA (pseudouridine(54)-N(1))-methyltransferase (202 aa).

S-adenosyl-L-methionine is bound by residues Leu134 and Gly155.

The protein belongs to the methyltransferase superfamily. TrmY family. As to quaternary structure, homodimer.

Its subcellular location is the cytoplasm. The catalysed reaction is pseudouridine(54) in tRNA + S-adenosyl-L-methionine = N(1)-methylpseudouridine(54) in tRNA + S-adenosyl-L-homocysteine + H(+). Specifically catalyzes the N1-methylation of pseudouridine at position 54 (Psi54) in tRNAs. The sequence is that of tRNA (pseudouridine(54)-N(1))-methyltransferase from Thermococcus gammatolerans (strain DSM 15229 / JCM 11827 / EJ3).